Consider the following 172-residue polypeptide: R-phycocyanin beta subunit (172 aa).

Asn72 is modified (N4-methylasparagine). Cys82 contacts (2R,3E)-phycocyanobilin. Cys153 is a (2R,3E)-phycoerythrobilin binding site.

This sequence belongs to the phycobiliprotein family. As to quaternary structure, heterodimer of an alpha and a beta subunit, which further assembles into trimers and the trimers into hexamers. Contains two covalently linked bilin chromophores.

The protein localises to the cellular thylakoid membrane. Functionally, light-harvesting photosynthetic bile pigment-protein from the phycobiliprotein complex (phycobilisome, PBS). Phycocyanin is the major phycobiliprotein in the PBS rod. The protein is R-phycocyanin beta subunit (rpcB) of Synechococcus sp. (strain WH7803).